We begin with the raw amino-acid sequence, 500 residues long: MGLLVGDDLWAVVIFTAIFLLLVDLVHRRQRWTACYPPGPVPFPGLGNLLQVDFENIPYSFYKLQNRYGNVFSLQMAWKPVVVVNGLKAVRELLVTYGEDTSDRPLMPIYNHIGYGHKSKGVILAPYGPEWREQRRFSVSTLRDFGLGKKSLEQWVTEEAGHLCDAFTKEAEHPFNPSPLLSKAVSNVIASLIYARRFEYEDPFFNRMLKTLKESLGEDTGFVGEVLNAIPMLLHIPGLPDKAFPKLNSFIALVNKMLIEHDLTWDPAQPPRDLTDAFLAEVEKAKGNPESSFNDKNLRIVVIDLFMAGMVTTSTTLSWALLLMILHPDVQRRVHQEIDEVIGHVRHPEMADQARMPYTNAVIHEVQRFADIVPTNLPHMTSRDIKFQDFFIPKGTTLIPNLSSVLKDETVWEKPLRFYPEHFLDAQGHFVKHEAFMPFSAGRRSCLGEPLARMELFLFFTCLLQRFSFSVPDGQPRPSDYGIYTMPVTPEPYQLCAVAR.

Phosphoserine is present on Ser249. Cys446 contacts heme.

This sequence belongs to the cytochrome P450 family. Heme is required as a cofactor.

It is found in the endoplasmic reticulum membrane. It localises to the microsome membrane. It catalyses the reaction an organic molecule + reduced [NADPH--hemoprotein reductase] + O2 = an alcohol + oxidized [NADPH--hemoprotein reductase] + H2O + H(+). Its function is as follows. Cytochromes P450 are a group of heme-thiolate monooxygenases. In liver microsomes, this enzyme is involved in an NADPH-dependent electron transport pathway. It oxidizes a variety of structurally unrelated compounds, including steroids, fatty acids, and xenobiotics. The sequence is that of Cytochrome P450 2D26 from Mus musculus (Mouse).